Consider the following 237-residue polypeptide: Small ribosomal subunit protein uS2c (237 aa).

It belongs to the universal ribosomal protein uS2 family.

It is found in the plastid. The polypeptide is Small ribosomal subunit protein uS2c (rps2) (Epifagus virginiana (Beechdrops)).